The chain runs to 448 residues: NADH oxidase (448 aa).

FAD-binding positions include 7-11 (GSGAA), C42, V80, 110-113 (ATGA), and R132. The active-site Redox-active is the C42. NAD(+) is bound by residues 152–167 (VAVV…MAYG), E179, and G243. FAD contacts are provided by residues 271-281 (TSIPNIYAVGD), G299, and T300. NAD(+) is bound at residue V328. FAD is bound at residue Y423.

The protein belongs to the class-III pyridine nucleotide-disulfide oxidoreductase family. FAD serves as cofactor.

The catalysed reaction is 2 NADH + O2 + 2 H(+) = 2 NAD(+) + 2 H2O. Its function is as follows. Catalyzes the four-electron reduction of molecular oxygen to water. The chain is NADH oxidase from Methanocaldococcus jannaschii (strain ATCC 43067 / DSM 2661 / JAL-1 / JCM 10045 / NBRC 100440) (Methanococcus jannaschii).